The primary structure comprises 317 residues: 4-hydroxy-3-methylbut-2-enyl diphosphate reductase (317 aa).

Cysteine 12 contributes to the [4Fe-4S] cluster binding site. The (2E)-4-hydroxy-3-methylbut-2-enyl diphosphate site is built by histidine 41 and histidine 74. Residues histidine 41 and histidine 74 each contribute to the dimethylallyl diphosphate site. 2 residues coordinate isopentenyl diphosphate: histidine 41 and histidine 74. Residue cysteine 97 coordinates [4Fe-4S] cluster. A (2E)-4-hydroxy-3-methylbut-2-enyl diphosphate-binding site is contributed by histidine 125. A dimethylallyl diphosphate-binding site is contributed by histidine 125. Histidine 125 contacts isopentenyl diphosphate. Catalysis depends on glutamate 127, which acts as the Proton donor. Threonine 168 provides a ligand contact to (2E)-4-hydroxy-3-methylbut-2-enyl diphosphate. Cysteine 198 serves as a coordination point for [4Fe-4S] cluster. (2E)-4-hydroxy-3-methylbut-2-enyl diphosphate contacts are provided by serine 226, serine 227, asparagine 228, and serine 270. 4 residues coordinate dimethylallyl diphosphate: serine 226, serine 227, asparagine 228, and serine 270. 4 residues coordinate isopentenyl diphosphate: serine 226, serine 227, asparagine 228, and serine 270.

The protein belongs to the IspH family. Homodimer. The cofactor is [4Fe-4S] cluster.

The catalysed reaction is isopentenyl diphosphate + 2 oxidized [2Fe-2S]-[ferredoxin] + H2O = (2E)-4-hydroxy-3-methylbut-2-enyl diphosphate + 2 reduced [2Fe-2S]-[ferredoxin] + 2 H(+). It carries out the reaction dimethylallyl diphosphate + 2 oxidized [2Fe-2S]-[ferredoxin] + H2O = (2E)-4-hydroxy-3-methylbut-2-enyl diphosphate + 2 reduced [2Fe-2S]-[ferredoxin] + 2 H(+). Its pathway is isoprenoid biosynthesis; dimethylallyl diphosphate biosynthesis; dimethylallyl diphosphate from (2E)-4-hydroxy-3-methylbutenyl diphosphate: step 1/1. It functions in the pathway isoprenoid biosynthesis; isopentenyl diphosphate biosynthesis via DXP pathway; isopentenyl diphosphate from 1-deoxy-D-xylulose 5-phosphate: step 6/6. Catalyzes the conversion of 1-hydroxy-2-methyl-2-(E)-butenyl 4-diphosphate (HMBPP) into a mixture of isopentenyl diphosphate (IPP) and dimethylallyl diphosphate (DMAPP). Acts in the terminal step of the DOXP/MEP pathway for isoprenoid precursor biosynthesis. The chain is 4-hydroxy-3-methylbut-2-enyl diphosphate reductase from Yersinia enterocolitica serotype O:8 / biotype 1B (strain NCTC 13174 / 8081).